We begin with the raw amino-acid sequence, 460 residues long: Cytochrome P450 CYP71D312 (460 aa).

C398 is a heme binding site.

This sequence belongs to the cytochrome P450 family. Heme serves as cofactor.

Probable heme-thiolate monooxygenase. The polypeptide is Cytochrome P450 CYP71D312 (Panax ginseng (Korean ginseng)).